The sequence spans 533 residues: Acid-sensing ion channel 2 (533 aa).

A compositionally biased stretch (basic and acidic residues) spans 1–16; sequence MDLKEACGSEASRETE. Residues 1–23 are disordered; that stretch reads MDLKEACGSEASRETESGGMGSL. Residues 1-68 lie on the Cytoplasmic side of the membrane; the sequence is MDLKEACGSE…STSRRLLWSA (68 aa). A helical transmembrane segment spans residues 69 to 89; sequence ALLASLVLLVLESTERLAYFL. At 90 to 445 the chain is on the extracellular side; sequence SYPHVTSVDA…ETIEQKKAYE (356 aa). Intrachain disulfides connect Cys113-Cys214, Cys310-Cys385, Cys328-Cys381, Cys332-Cys379, Cys341-Cys363, and Cys343-Cys355. Asn163 carries N-linked (GlcNAc...) asparagine glycosylation. N-linked (GlcNAc...) asparagine glycosylation is found at Asn386 and Asn413. A helical membrane pass occupies residues 446–466; it reads VAGLLGDIGGQMGLFIGASIL. The GAS motif; ion selectivity filter signature appears at 462 to 464; the sequence is GAS. Topologically, residues 467 to 533 are cytoplasmic; it reads TLLELFDYAY…TLGTLEEIAC (67 aa).

This sequence belongs to the amiloride-sensitive sodium channel (TC 1.A.6) family. ASIC2 subfamily. As to quaternary structure, can form homotrimers; probably non-functional. Heterotrimer; could form functional heterotrimers producing channel with specific properties depending on their composition. In terms of tissue distribution, expressed in central nervous system.

It is found in the cell membrane. It catalyses the reaction Na(+)(in) = Na(+)(out). Its activity is regulated as follows. Inhibited by the diuretic drug amiloride. Could form pH-gated heterotrimeric sodium channels that act as postsynaptic excitatory sensors in the nervous system, generating rapid, transient inward currents that fully desensitize upon extracellular acidification. This is Acid-sensing ion channel 2 (asic2) from Danio rerio (Zebrafish).